Reading from the N-terminus, the 515-residue chain is Hyccin (515 aa).

Residues 358–378 show a composition bias toward low complexity; sequence STSQSALSNSSNTSSKNLLGK. Disordered regions lie at residues 358-410 and 491-515; these read STSQ…TQRA and TDLP…LSTD. The span at 389-403 shows a compositional bias: basic and acidic residues; that stretch reads AGREKEGETCREHLS. A compositionally biased stretch (polar residues) spans 498-515; it reads KQPNQQRPPSISITLSTD.

It belongs to the Hyccin family. In terms of assembly, component of a phosphatidylinositol 4-kinase (PI4K) complex.

It localises to the cytoplasm. It is found in the cytosol. The protein localises to the cell membrane. Functionally, component of a complex required to localize phosphatidylinositol 4-kinase (PI4K) to the plasma membrane. The complex acts as a regulator of phosphatidylinositol 4-phosphate (PtdIns(4)P) synthesis. The sequence is that of Hyccin (HYCC1) from Gallus gallus (Chicken).